The following is a 195-amino-acid chain: BH3-interacting domain death agonist (195 aa).

Met-1 carries the N-acetylmethionine modification. The segment covering 58–69 (TDGSQASRSFNQ) has biased composition (polar residues). Residues 58-77 (TDGSQASRSFNQGRIEPDSE) are disordered. Residue Ser-78 is modified to Phosphoserine. Residues 87–100 (ARHLAQIGDEMDHN) carry the BH3 motif.

In terms of assembly, forms heterodimers either with the pro-apoptotic protein BAX or the anti-apoptotic protein BCL2. Interacts with PLEKHN1. Interacts with ITCH. Interacts with MTCH2. In terms of processing, TNF-alpha induces caspase-mediated cleavage into a major p15 and minor p13 and p11 products. Cleaved by CASP6 into a major p15 and minor p13 products, leading to release of cytochrome c and subsequent nonalcoholic steatohepatitis. Ubiquitinated by ITCH; ubiquitination results in proteasome-dependent degradation.

The protein resides in the cytoplasm. It is found in the mitochondrion membrane. The protein localises to the mitochondrion outer membrane. Induces caspases and apoptosis. Counters the protective effect of BCL2. Functionally, induces caspase activation and apoptosis. Allows the release of cytochrome c. The sequence is that of BH3-interacting domain death agonist (Bid) from Mus musculus (Mouse).